The sequence spans 129 residues: Mini-ribonuclease 3-like protein (129 aa).

Aspartate 23 is an active-site residue.

Belongs to the MrnC RNase family.

In terms of biological role, might be a ribonuclease involved in RNA processing. The protein is Mini-ribonuclease 3-like protein (mrnCL) of Fusobacterium nucleatum subsp. nucleatum (strain ATCC 25586 / DSM 15643 / BCRC 10681 / CIP 101130 / JCM 8532 / KCTC 2640 / LMG 13131 / VPI 4355).